The chain runs to 148 residues: uncharacterized protein (148 aa).

Positions M1–S17 are enriched in polar residues. Residues M1–R148 are disordered. Composition is skewed to basic and acidic residues over residues E36 to P47 and K58 to R67. 2 positions are modified to phosphoserine: S100 and S107. The span at V128–R148 shows a compositional bias: basic residues.

This is an uncharacterized protein from Arabidopsis thaliana (Mouse-ear cress).